The sequence spans 174 residues: Regenerating islet-derived protein 3-alpha (174 aa).

The signal sequence occupies residues 1–25 (MLPRLSFNNVSWTLLYYLFIFQVRG). Positions 26-36 (EDSQKAVPSTR) are excised as a propeptide. Cystine bridges form between Cys39-Cys50, Cys67-Cys170, and Cys145-Cys162. The region spanning 46–171 (YRSYCYTLVT…CDVELPFVCK (126 aa)) is the C-type lectin domain. Residues 102–117 (WIWLHDPTMGQQPNGG) form a sufficient to activate EXTL3 region. Zn(2+) is bound by residues His106 and Glu120.

In terms of assembly, forms a hexameric membrane-permeabilizing oligomeric pore on membrane phospholipids. The hexamer is formed by three dimers related by helical symmetry. Forms filaments, filamentation traps pore complexes and limits damage to host cells. Interacts with EXTL3. Proteolytic processing by trypsin removes an inhibitory N-terminal propeptide and is essential for peptidoglycan binding and antibacterial activity. Low expression found in healthy pancreas.

Its subcellular location is the secreted. Bactericidal C-type lectin. The lack of the EPN motif may explain its inability to bind peptidoglycan. In terms of biological role, acts as a hormone in response to different stimuli like anti-inflammatory signals, such as IL17A, or gut microbiome. Secreted by different cell types to activate its receptor EXTL3 and induce cell specific signaling pathways. Induced by IL17A in keratinocytes, regulates keratinocyte proliferation and differentiation after skin injury via activation of EXTL3-PI3K-AKT signaling pathway. In parallel, inhibits skin inflammation through the inhibition of inflammatory cytokines such as IL6 and TNF. In pancreas, is able to permealize beta-cells membrane and stimulate their proliferation. This is Regenerating islet-derived protein 3-alpha (Reg3a) from Rattus norvegicus (Rat).